Consider the following 450-residue polypeptide: 3-phosphoshikimate 1-carboxyvinyltransferase (450 aa).

3-phosphoshikimate contacts are provided by lysine 28, serine 29, and arginine 33. Lysine 28 serves as a coordination point for phosphoenolpyruvate. Residues glycine 100 and arginine 128 each contribute to the phosphoenolpyruvate site. Residues serine 173, glutamine 175, aspartate 326, and lysine 353 each coordinate 3-phosphoshikimate. Glutamine 175 contributes to the phosphoenolpyruvate binding site. The active-site Proton acceptor is the aspartate 326. Residues arginine 357 and arginine 402 each contribute to the phosphoenolpyruvate site.

This sequence belongs to the EPSP synthase family. Monomer.

It localises to the cytoplasm. It catalyses the reaction 3-phosphoshikimate + phosphoenolpyruvate = 5-O-(1-carboxyvinyl)-3-phosphoshikimate + phosphate. Its pathway is metabolic intermediate biosynthesis; chorismate biosynthesis; chorismate from D-erythrose 4-phosphate and phosphoenolpyruvate: step 6/7. Catalyzes the transfer of the enolpyruvyl moiety of phosphoenolpyruvate (PEP) to the 5-hydroxyl of shikimate-3-phosphate (S3P) to produce enolpyruvyl shikimate-3-phosphate and inorganic phosphate. The polypeptide is 3-phosphoshikimate 1-carboxyvinyltransferase (Brucella melitensis biotype 1 (strain ATCC 23456 / CCUG 17765 / NCTC 10094 / 16M)).